The following is a 371-amino-acid chain: Aminomethyltransferase (371 aa).

The protein belongs to the GcvT family. The glycine cleavage system is composed of four proteins: P, T, L and H.

It carries out the reaction N(6)-[(R)-S(8)-aminomethyldihydrolipoyl]-L-lysyl-[protein] + (6S)-5,6,7,8-tetrahydrofolate = N(6)-[(R)-dihydrolipoyl]-L-lysyl-[protein] + (6R)-5,10-methylene-5,6,7,8-tetrahydrofolate + NH4(+). In terms of biological role, the glycine cleavage system catalyzes the degradation of glycine. The sequence is that of Aminomethyltransferase from Oceanobacillus iheyensis (strain DSM 14371 / CIP 107618 / JCM 11309 / KCTC 3954 / HTE831).